Here is a 485-residue protein sequence, read N- to C-terminus: ATP synthase subunit beta (485 aa).

170–177 (GGAGVGKT) serves as a coordination point for ATP.

It belongs to the ATPase alpha/beta chains family. In terms of assembly, F-type ATPases have 2 components, CF(1) - the catalytic core - and CF(0) - the membrane proton channel. CF(1) has five subunits: alpha(3), beta(3), gamma(1), delta(1), epsilon(1). CF(0) has three main subunits: a(1), b(2) and c(9-12). The alpha and beta chains form an alternating ring which encloses part of the gamma chain. CF(1) is attached to CF(0) by a central stalk formed by the gamma and epsilon chains, while a peripheral stalk is formed by the delta and b chains.

Its subcellular location is the cell membrane. The enzyme catalyses ATP + H2O + 4 H(+)(in) = ADP + phosphate + 5 H(+)(out). Produces ATP from ADP in the presence of a proton gradient across the membrane. The catalytic sites are hosted primarily by the beta subunits. This is ATP synthase subunit beta from Salinispora arenicola (strain CNS-205).